The chain runs to 366 residues: MKLKIVAVVVTGLLAANVAHAAEVYNKDGNKLDLYGKVTALRYFTDDKRDDGDKTYARLGFKGGTQINDQMIGFGHWEYDFKGYNDEANGSRGNKTRLAYAGLKISEFGSLDYGRNYGVGYDIGSWTDMLPEFGGDTWSQKDVFMTYRTTGLATYRNYDFFGLIEGLNFAAQYQGKNERTDNSHLYGADYTRANGDGFGISSTYVYDGFGIGAVYTKSDRTNAQERAAANPLNASGKNAELWATGIKYDANNIYFAANYDETLNMTTYGDGYISNKAQSFEVVAQYQFDFGLRPSLAYLKSKGRDLGRYADQDMIEYIDVGATYFFNKNMSTYVDYKINLIDESDFTRAVDIRTDNIVATGITYQF.

An N-terminal signal peptide occupies residues 1–21; the sequence is MKLKIVAVVVTGLLAANVAHA.

This sequence belongs to the Gram-negative porin family. As to quaternary structure, homotrimer. Forms mixed heterotrimers with OmpF and with PhoE; other mixed heterotrimers are also probable.

The protein resides in the cell outer membrane. In terms of biological role, forms pores that allow passive diffusion of small molecules across the outer membrane. Plays a role in virulence. The protein is Outer membrane porin C 2 of Shigella flexneri serotype 5a (strain M90T).